Here is a 398-residue protein sequence, read N- to C-terminus: Arginine biosynthesis bifunctional protein ArgJ (398 aa).

Substrate is bound by residues T148, K174, T185, E271, N393, and T398. Catalysis depends on T185, which acts as the Nucleophile.

This sequence belongs to the ArgJ family. In terms of assembly, heterotetramer of two alpha and two beta chains.

Its subcellular location is the cytoplasm. The catalysed reaction is N(2)-acetyl-L-ornithine + L-glutamate = N-acetyl-L-glutamate + L-ornithine. It catalyses the reaction L-glutamate + acetyl-CoA = N-acetyl-L-glutamate + CoA + H(+). It participates in amino-acid biosynthesis; L-arginine biosynthesis; L-ornithine and N-acetyl-L-glutamate from L-glutamate and N(2)-acetyl-L-ornithine (cyclic): step 1/1. It functions in the pathway amino-acid biosynthesis; L-arginine biosynthesis; N(2)-acetyl-L-ornithine from L-glutamate: step 1/4. Its function is as follows. Catalyzes two activities which are involved in the cyclic version of arginine biosynthesis: the synthesis of N-acetylglutamate from glutamate and acetyl-CoA as the acetyl donor, and of ornithine by transacetylation between N(2)-acetylornithine and glutamate. The protein is Arginine biosynthesis bifunctional protein ArgJ of Listeria monocytogenes serovar 1/2a (strain ATCC BAA-679 / EGD-e).